The sequence spans 265 residues: Phosphonates import ATP-binding protein PhnC 1 (265 aa).

In terms of domain architecture, ABC transporter spans 3–247 (LRLSAIDLRH…HLDTLYANEQ (245 aa)). ATP is bound at residue 36-43 (GPSGAGKT).

The protein belongs to the ABC transporter superfamily. Phosphonates importer (TC 3.A.1.9.1) family. In terms of assembly, the complex is composed of two ATP-binding proteins (PhnC), two transmembrane proteins (PhnE) and a solute-binding protein (PhnD).

Its subcellular location is the cell inner membrane. The enzyme catalyses phosphonate(out) + ATP + H2O = phosphonate(in) + ADP + phosphate + H(+). Its function is as follows. Part of the ABC transporter complex PhnCDE involved in phosphonates import. Responsible for energy coupling to the transport system. The chain is Phosphonates import ATP-binding protein PhnC 1 from Pseudomonas syringae pv. tomato (strain ATCC BAA-871 / DC3000).